The sequence spans 269 residues: 5'-nucleotidase SurE (269 aa).

The a divalent metal cation site is built by aspartate 11, aspartate 12, serine 43, and asparagine 101.

This sequence belongs to the SurE nucleotidase family. Requires a divalent metal cation as cofactor.

It localises to the cytoplasm. The catalysed reaction is a ribonucleoside 5'-phosphate + H2O = a ribonucleoside + phosphate. Functionally, nucleotidase that shows phosphatase activity on nucleoside 5'-monophosphates. This chain is 5'-nucleotidase SurE, found in Prochlorococcus marinus (strain MIT 9301).